Consider the following 480-residue polypeptide: Porphobilinogen deaminase, chloroplastic (480 aa).

The transit peptide at 1-139 (MYCGRYETIG…VSGGRIWSLA (139 aa)) directs the protein to the chloroplast. The residue at position 395 (Cys-395) is an S-(dipyrrolylmethanemethyl)cysteine.

This sequence belongs to the HMBS family. Dipyrromethane is required as a cofactor.

It is found in the plastid. It localises to the chloroplast. The catalysed reaction is 4 porphobilinogen + H2O = hydroxymethylbilane + 4 NH4(+). It functions in the pathway porphyrin-containing compound metabolism; protoporphyrin-IX biosynthesis; coproporphyrinogen-III from 5-aminolevulinate: step 2/4. Its pathway is porphyrin-containing compound metabolism; chlorophyll biosynthesis. Its function is as follows. Tetrapolymerization of the monopyrrole PBG into the hydroxymethylbilane pre-uroporphyrinogen in several discrete steps. This is Porphobilinogen deaminase, chloroplastic from Euglena gracilis.